The primary structure comprises 1244 residues: Ras-specific guanine nucleotide-releasing factor 2 (1244 aa).

Positions 22–129 (EGTKRGYLSK…WVEAIQQASY (108 aa)) constitute a PH 1 domain. Positions 147–189 (VQIVETEKVAANQLRTQLEDQDTEIERLKAEIIALNKTKERMR) form a coiled coil. An IQ domain is found at 201-230 (DIKKIKKVQSFMRGWLCRRKWKIIVQDYIC). The DH domain maps to 239 to 425 (KRNQIVFNMV…EELSRVMHDE (187 aa)). One can recognise a PH 2 domain in the interval 466–584 (PSVERGKLSK…WTSDISQCID (119 aa)). In terms of domain architecture, N-terminal Ras-GEF spans 631-745 (KVPQIRYASV…PVRTRKLSLN (115 aa)). Disordered regions lie at residues 704-743 (NRSG…RKLS), 759-814 (TTSS…NAEV), and 843-879 (PESP…AENS). Positions 706–715 (SGDHVNDKSP) are enriched in basic and acidic residues. Residues 728 to 743 (SISSRTSSPVRTRKLS) show a composition bias toward polar residues. 2 stretches are compositionally biased toward low complexity: residues 759–774 (TTSS…ANPT) and 781–806 (NNNN…QSPG). In terms of domain architecture, Ras-GEF spans 1009–1241 (SAMEIAEQIT…YDLSLKIEPR (233 aa)).

It localises to the cytoplasm. Its subcellular location is the cell membrane. The protein resides in the endoplasmic reticulum membrane. In terms of biological role, functions as a calcium-regulated nucleotide exchange factor activating both Ras and rac1 through the exchange of bound GDP for GTP. May function in synaptic plasticity. This chain is Ras-specific guanine nucleotide-releasing factor 2 (rasgrf2), found in Danio rerio (Zebrafish).